The primary structure comprises 672 residues: MTRVLEPAEPILSNDGTPYSPRYDDVYHSARGGLAQAHHVFLGGNGLPEGWAGREQFVIVETGFGQGLNFLATWQAWRSDPQRCRRLHFVSIEKHPFTREGLARLHAHAGLGDLLPLSDQLQQQWPDALPGLHRLSFEDGAVTLTLALGDVETMLPKLVLGADAFYLDGFSPSRNAEMWSDTVFRGLARLARIGATLATYTAAGFVRRGLTAAGFEAHKAPGFGGKRDMTVARFAPVWKNRRHAPPEAAQWAERHAIVIGAGLAGCAVTERLAARGWRVTLLDAHDGPARQTSCHRAAAMHAHVSADDSFLSRLSRAGNLHALRAWGALEAAGYPVGWHGTGVLQIGEDDAENAAQQAALAELRFPESFVRWMSPQEATEQHGATVPRGGLWFPKGGWVAPPDICRAQLAKAGAAVDALFNCRVAAIRRIGDAWQALADDGGVLAAAPVLVLANAYEADRLTSGQFLALRRVRGQLTDLAPAQAEALGGWPDCVVTGGGYLLPRDAAGGARMGSSYEADEGPLVERPEVHAANLDRLASMLPDRASQIAQIDPATLQGYVGVRTVTYNRLPLVGRIADDAQALSRAAALRGAHLRDLPRLPGLYAALAYASRGLTWAALCAELIASQIEGEPLPLEADLADAIDPARLLLRALRHGHAQAPESAGPGVDAAG.

The tRNA (mnm(5)s(2)U34)-methyltransferase stretch occupies residues 1 to 235 (MTRVLEPAEP…KRDMTVARFA (235 aa)). An FAD-dependent cmnm(5)s(2)U34 oxidoreductase region spans residues 259-672 (IGAGLAGCAV…SAGPGVDAAG (414 aa)).

In the N-terminal section; belongs to the methyltransferase superfamily. tRNA (mnm(5)s(2)U34)-methyltransferase family. It in the C-terminal section; belongs to the DAO family. FAD is required as a cofactor.

It localises to the cytoplasm. The enzyme catalyses 5-aminomethyl-2-thiouridine(34) in tRNA + S-adenosyl-L-methionine = 5-methylaminomethyl-2-thiouridine(34) in tRNA + S-adenosyl-L-homocysteine + H(+). Its function is as follows. Catalyzes the last two steps in the biosynthesis of 5-methylaminomethyl-2-thiouridine (mnm(5)s(2)U) at the wobble position (U34) in tRNA. Catalyzes the FAD-dependent demodification of cmnm(5)s(2)U34 to nm(5)s(2)U34, followed by the transfer of a methyl group from S-adenosyl-L-methionine to nm(5)s(2)U34, to form mnm(5)s(2)U34. This Cupriavidus metallidurans (strain ATCC 43123 / DSM 2839 / NBRC 102507 / CH34) (Ralstonia metallidurans) protein is tRNA 5-methylaminomethyl-2-thiouridine biosynthesis bifunctional protein MnmC.